Consider the following 244-residue polypeptide: DNA polymerase sliding clamp (244 aa).

The protein belongs to the PCNA family. In terms of assembly, homotrimer. The subunits circularize to form a toroid; DNA passes through its center. Replication factor C (RFC) is required to load the toroid on the DNA.

Functionally, sliding clamp subunit that acts as a moving platform for DNA processing. Responsible for tethering the catalytic subunit of DNA polymerase and other proteins to DNA during high-speed replication. This Methanobrevibacter smithii (strain ATCC 35061 / DSM 861 / OCM 144 / PS) protein is DNA polymerase sliding clamp.